The following is a 212-amino-acid chain: ATP-dependent Clp protease proteolytic subunit (212 aa).

S114 functions as the Nucleophile in the catalytic mechanism. H139 is a catalytic residue.

It belongs to the peptidase S14 family. Fourteen ClpP subunits assemble into 2 heptameric rings which stack back to back to give a disk-like structure with a central cavity, resembling the structure of eukaryotic proteasomes.

The protein resides in the cytoplasm. The enzyme catalyses Hydrolysis of proteins to small peptides in the presence of ATP and magnesium. alpha-casein is the usual test substrate. In the absence of ATP, only oligopeptides shorter than five residues are hydrolyzed (such as succinyl-Leu-Tyr-|-NHMec, and Leu-Tyr-Leu-|-Tyr-Trp, in which cleavage of the -Tyr-|-Leu- and -Tyr-|-Trp bonds also occurs).. In terms of biological role, cleaves peptides in various proteins in a process that requires ATP hydrolysis. Has a chymotrypsin-like activity. Plays a major role in the degradation of misfolded proteins. This chain is ATP-dependent Clp protease proteolytic subunit, found in Azoarcus sp. (strain BH72).